The following is a 297-amino-acid chain: Ribosomal RNA small subunit methyltransferase A (297 aa).

S-adenosyl-L-methionine-binding residues include asparagine 28, leucine 30, glycine 55, glutamate 76, aspartate 101, and asparagine 126.

The protein belongs to the class I-like SAM-binding methyltransferase superfamily. rRNA adenine N(6)-methyltransferase family. RsmA subfamily.

It is found in the cytoplasm. The catalysed reaction is adenosine(1518)/adenosine(1519) in 16S rRNA + 4 S-adenosyl-L-methionine = N(6)-dimethyladenosine(1518)/N(6)-dimethyladenosine(1519) in 16S rRNA + 4 S-adenosyl-L-homocysteine + 4 H(+). In terms of biological role, specifically dimethylates two adjacent adenosines (A1518 and A1519) in the loop of a conserved hairpin near the 3'-end of 16S rRNA in the 30S particle. May play a critical role in biogenesis of 30S subunits. The protein is Ribosomal RNA small subunit methyltransferase A of Latilactobacillus sakei subsp. sakei (strain 23K) (Lactobacillus sakei subsp. sakei).